The primary structure comprises 1122 residues: Adhesin P1 (1122 aa).

The first 30 residues, 1–30 (MKKLIFKLSVGITPLALIGLGSFGLAVSGA), serve as a signal peptide directing secretion. 3 disordered regions span residues 183-209 (AGDTSAEGSATPAGGGSGSSAAGGGAV), 244-273 (DYNSDQNKIPKPKTLLDSSESSESINGGRT), and 544-563 (QNSGSQQSTSTPMPNSNGNE). Over residues 195-208 (AGGGSGSSAAGGGA) the composition is skewed to gly residues. Residues 259–273 (LDSSESSESINGGRT) are compositionally biased toward polar residues. The helical transmembrane segment at 997–1021 (VLPVAISIPIIIIALALALGLGIGI) threads the bilayer. The tract at residues 1066–1122 (KTPQMLQANKKDGASSPSKPSAPAAKKPTGPTKPSAPGAKPTAPAKPKAPAPTKKIE) is disordered. Over residues 1079-1122 (ASSPSKPSAPAAKKPTGPTKPSAPGAKPTAPAKPKAPAPTKKIE) the composition is skewed to low complexity.

It belongs to the adhesin P1 family.

Its subcellular location is the cell membrane. In terms of biological role, could be involved in cytadherence. This Mycoplasmoides gallisepticum (Mycoplasma gallisepticum) protein is Adhesin P1 (gapA).